Reading from the N-terminus, the 393-residue chain is Purine permease 14 (393 aa).

An N-acetylalanine modification is found at alanine 2. The next 10 membrane-spanning stretches (helical) occupy residues 46–66, 90–110, 133–153, 161–181, 189–209, 225–245, 268–288, 308–328, 339–359, and 363–383; these read WPTI…AKLL, TQSL…LIFI, LAVI…LAAM, GVFT…AAFI, WVVI…SSSF, WAAL…QNVF, VIIF…LIAG, VMAM…IVGL, VISV…FNFM, and FDAF…AYFF.

The protein belongs to the purine permeases (TC 2.A.7.14) family. In terms of tissue distribution, expressed in seedlings, leaves, embryos, ovules, seeds and the root and shoot meristems. In heart-stage embryos, detected in cells that failed to respond to cytokinins, including the prospective cotyledons.

It localises to the cell membrane. Functionally, purine permease implicated in ATP-dependent cytokinin translocation that controls the spatiotemporal landscape of cytokinin signaling. Depletes ligands from the apoplast, which leads to a suppression of the cytokinin response. This is Purine permease 14 from Arabidopsis thaliana (Mouse-ear cress).